Consider the following 96-residue polypeptide: Small ribosomal subunit protein bS6 (96 aa).

It belongs to the bacterial ribosomal protein bS6 family.

Binds together with bS18 to 16S ribosomal RNA. This is Small ribosomal subunit protein bS6 (rpsF) from Mycobacterium bovis (strain ATCC BAA-935 / AF2122/97).